A 442-amino-acid polypeptide reads, in one-letter code: Cell adhesion molecule 1 (442 aa).

An N-terminal signal peptide occupies residues 1 to 44 (MASVVLPSGSQCAAAAAAAAPPGLRLRLLLLLFSAAALIPTGDG). The region spanning 45–139 (QNLFTKDVTV…PPQESYTTIT (95 aa)) is the Ig-like V-type domain. Topologically, residues 45–374 (QNLFTKDVTV…EEGSIRAVDH (330 aa)) are extracellular. Cysteines 64 and 124 form a disulfide. Residues Asn-67, Asn-101, Asn-113, and Asn-165 are each glycosylated (N-linked (GlcNAc...) asparagine). 2 consecutive Ig-like C2-type domains span residues 144 to 238 (PRNL…RYLE) and 243 to 329 (PQVH…YMLY). 2 cysteine pairs are disulfide-bonded: Cys-166–Cys-220 and Cys-267–Cys-313. Residues Asn-304 and Asn-308 are each glycosylated (N-linked (GlcNAc...) asparagine). The chain crosses the membrane as a helical span at residues 375–395 (AVIGGVVAVVVFAMLCLLIIL). Residues 396-442 (GRYFARHKGTYFTHEAKGADDAADADTAIINAEGGQNNSEEKKEYFI) lie on the Cytoplasmic side of the membrane. Thr-422 carries the post-translational modification Phosphothreonine. Ser-434 carries the post-translational modification Phosphoserine.

This sequence belongs to the nectin family. In terms of assembly, homodimer (via Ig-like V-type domain). Interacts with FARP1. Interacts (via Ig-like V-type domain) with CRTAM (via Ig-like V-type domain); the interaction competes with CRTAM homodimerization and CADM1 homodimerization. Interacts (via C-terminus) with EPB41L3/DAL1. The interaction with EPB41L3/DAL1 may act to anchor CADM1 to the actin cytoskeleton. Interacts (via C-terminus) with MPP2 (via PDZ domain). Interacts (via C-terminus) with MPP3 (via PDZ domain); this interaction connects CADM1 with DLG1. Interacts (via C-terminus) with PALS2 (via PDZ domain). (Microbial infection) Interacts with herpes virus 8 proteins vFLIP and vGPCR; these interactions are essential for NF-kappa-B activation. Post-translationally, glycosylation at Asn-67 and Asn-101 promotes adhesive binding and synapse induction.

Its subcellular location is the cell membrane. The protein resides in the synapse. Functionally, mediates homophilic cell-cell adhesion in a Ca(2+)-independent manner. Also mediates heterophilic cell-cell adhesion with CADM3 and NECTIN3 in a Ca(2+)-independent manner. Interaction with CRTAM promotes natural killer (NK) cell cytotoxicity and interferon-gamma (IFN-gamma) secretion by CD8+ cells in vitro as well as NK cell-mediated rejection of tumors expressing CADM1 in vivo. In mast cells, may mediate attachment to and promote communication with nerves. CADM1, together with MITF, is essential for development and survival of mast cells in vivo. By interacting with CRTAM and thus promoting the adhesion between CD8+ T-cells and CD8+ dendritic cells, regulates the retention of activated CD8+ T-cell within the draining lymph node. Required for the intestinal retention of intraepithelial CD4+ CD8+ T-cells and, to a lesser extent, intraepithelial and lamina propria CD8+ T-cells and CD4+ T-cells. Interaction with CRTAM promotes the adhesion to gut-associated CD103+ dendritic cells, which may facilitate the expression of gut-homing and adhesion molecules on T-cells and the conversion of CD4+ T-cells into CD4+ CD8+ T-cells. Acts as a synaptic cell adhesion molecule and plays a role in the formation of dendritic spines and in synapse assembly. May be involved in neuronal migration, axon growth, pathfinding, and fasciculation on the axons of differentiating neurons. May play diverse roles in the spermatogenesis including in the adhesion of spermatocytes and spermatids to Sertoli cells and for their normal differentiation into mature spermatozoa. Acts as a tumor suppressor in non-small-cell lung cancer (NSCLC) cells. May contribute to the less invasive phenotypes of lepidic growth tumor cells. In terms of biological role, (Microbial infection) Induces cell fusion in neuron infected by a neuropathogenic strain of measles. Interacts with measles hemagglutinin to trigger hyperfusogenic F-mediated membrane fusion and presumably transsynaptic cell-to-cell transmission of the virus. This chain is Cell adhesion molecule 1, found in Homo sapiens (Human).